The primary structure comprises 315 residues: Oxalate oxidoreductase subunit delta (315 aa).

4Fe-4S ferredoxin-type domains are found at residues 252 to 280 (QRPI…TRTE) and 281 to 310 (EGPV…NVPE). [4Fe-4S] cluster is bound by residues cysteine 261, cysteine 264, cysteine 267, cysteine 271, cysteine 290, cysteine 293, cysteine 296, and cysteine 300.

As to quaternary structure, dimer of heterotrimer of one alpha, one beta and one delta subunit. It depends on [4Fe-4S] cluster as a cofactor.

The catalysed reaction is oxidized 2[4Fe-4S]-[ferredoxin] + oxalate = reduced 2[4Fe-4S]-[ferredoxin] + 2 CO2. Catalyzes the anaerobic oxidation of oxalate using a broad range of electron acceptors, including ferredoxin and the nickel-dependent carbon monoxide dehydrogenase. Does not require coenzyme A as cosubstrate. Enables anaerobic growth on oxalate which is used as energy source by the bacteria. In Moorella thermoacetica (strain ATCC 39073 / JCM 9320), this protein is Oxalate oxidoreductase subunit delta.